Consider the following 171-residue polypeptide: O-acetyl-ADP-ribose deacetylase 2 (171 aa).

Residues 1–171 (MNKITVIQGD…NYDLYLKLLN (171 aa)) enclose the Macro domain. Substrate-binding positions include 10–11 (DI), Asn24, 32–34 (GVD), and 121–125 (STGIY). Residue Asp34 is the Proton acceptor of the active site.

The protein belongs to the MacroD-type family. YmdB subfamily. As to quaternary structure, homodimer. Interacts with RNase III.

The catalysed reaction is 3''-O-acetyl-ADP-D-ribose + H2O = ADP-D-ribose + acetate + H(+). The enzyme catalyses 2''-O-acetyl-ADP-D-ribose + H2O = ADP-D-ribose + acetate + H(+). Its function is as follows. Deacetylates O-acetyl-ADP ribose to yield ADP-ribose and free acetate. Down-regulates ribonuclease 3 (RNase III) activity. Acts by interacting directly with the region of the ribonuclease that is required for dimerization/activation. This Pantoea vagans (strain C9-1) (Pantoea agglomerans (strain C9-1)) protein is O-acetyl-ADP-ribose deacetylase 2.